The primary structure comprises 420 residues: Cysteate-C-fatty acyltransferase (420 aa).

Residues 114 to 115, histidine 219, threonine 247, and alanine 249 contribute to the pyridoxal 5'-phosphate site; that span reads GY. Lysine 250 carries the N6-(pyridoxal phosphate)lysine modification.

The protein belongs to the class-II pyridoxal-phosphate-dependent aminotransferase family. Requires pyridoxal 5'-phosphate as cofactor.

The enzyme catalyses isopentadecanoyl-CoA + L-cysteate + H(+) = 3-oxocapnine + CO2 + CoA. Its pathway is lipid metabolism. Its function is as follows. Transferase involved in the biosynthesis of capnine, a sulfonolipid present in the outer membrane of gliding Bacteroidetes and essential for gliding motility. Catalyzes the formation of 3-dehydrocapnine from cysteate and isopentadecanoyl-CoA (13-methyl-myristoyl-CoA). In vitro, products are also detected when 13-methyl-myristic acid is substituted with tridecylic acid, myristic acid, pentadecanoic acid or palmitic acid. The polypeptide is Cysteate-C-fatty acyltransferase (Capnocytophaga ochracea (strain ATCC 27872 / DSM 7271 / CCUG 9716 / JCM 12966 / NCTC 12371 / SS31 / VPI 2845) (Bacteroides ochraceus)).